Consider the following 66-residue polypeptide: Large ribosomal subunit protein bL33c (66 aa).

This sequence belongs to the bacterial ribosomal protein bL33 family.

Its subcellular location is the plastid. It localises to the chloroplast. The sequence is that of Large ribosomal subunit protein bL33c from Angiopteris evecta (Mule's foot fern).